We begin with the raw amino-acid sequence, 371 residues long: MTPEQKAKLEANRKLAIERLRKRGILSSDQLNRIESRNEPLKTRPLAVTSGSNRDDNAAAAVHVPNHNGQPSALANTNTNTTSLYGSGVVDGSKRDASVLDKRPTDRIRPSIRKQDYIEYDFATMQNLNGGYINPKDKLPNSDFTDDQEFESEFGSKKQKTLQDWKKEQLERKMLYENAPPPEHISKAPKCIECHINIEMDPVLHDVFKLQVCKQCSKEHPEKYALLTKTECKEDYFLTDPELNDEDLFHRLEKPNPHSGTFARMQLFVRCEVEAFAFKKWGGEEGLDEEWQRREEGKAHRREKKYEKKIKEMRLKTRAQEYTNRLREKKHGKAHIHHFSDPVDGGIDEDGYQIQRRRCTDCGLETEEIDI.

The interval 26 to 48 (LSSDQLNRIESRNEPLKTRPLAV) is disordered. Basic and acidic residues predominate over residues 32-42 (NRIESRNEPLK). Cys-191, Cys-194, Cys-213, and Cys-216 together coordinate Zn(2+). The segment at 191 to 216 (CIECHINIEMDPVLHDVFKLQVCKQC) is a zinc-finger region.

It belongs to the XPA family. As to quaternary structure, two monomers bind to kinked/damaged DNA (construct with only the C-terminal DNA-binding domain). Component of the nucleotide excision repair factor 1 (NEF1) complex consisting of RAD1, RAD10 and RAD14.

Its subcellular location is the nucleus. Functionally, involved in nucleotide excision repair. Binds specifically to damaged DNA. Required for the incision step. The polypeptide is DNA repair protein RAD14 (RAD14) (Saccharomyces cerevisiae (strain ATCC 204508 / S288c) (Baker's yeast)).